A 433-amino-acid chain; its full sequence is Serine hydroxymethyltransferase (433 aa).

Residue 121 to 123 (AHV) participates in (6S)-5,6,7,8-tetrahydrofolate binding. N6-(pyridoxal phosphate)lysine is present on K227. E243 provides a ligand contact to (6S)-5,6,7,8-tetrahydrofolate.

Belongs to the SHMT family. In terms of assembly, homodimer. The cofactor is pyridoxal 5'-phosphate.

Its subcellular location is the cytoplasm. Its pathway is amino-acid biosynthesis; glycine biosynthesis; glycine from L-serine: step 1/1. Functionally, catalyzes the reversible interconversion of serine and glycine with a modified folate serving as the one-carbon carrier. Also exhibits a pteridine-independent aldolase activity toward beta-hydroxyamino acids, producing glycine and aldehydes, via a retro-aldol mechanism. This chain is Serine hydroxymethyltransferase, found in Saccharolobus islandicus (strain M.14.25 / Kamchatka #1) (Sulfolobus islandicus).